The following is a 217-amino-acid chain: 3,4-dihydroxy-2-butanone 4-phosphate synthase (217 aa).

D-ribulose 5-phosphate-binding positions include 37 to 38 (RE), Asp42, 150 to 154 (RGGHT), and Glu174. Glu38 contributes to the Mg(2+) binding site. Position 153 (His153) interacts with Mg(2+).

The protein belongs to the DHBP synthase family. In terms of assembly, homodimer. Mg(2+) is required as a cofactor. It depends on Mn(2+) as a cofactor.

It catalyses the reaction D-ribulose 5-phosphate = (2S)-2-hydroxy-3-oxobutyl phosphate + formate + H(+). It functions in the pathway cofactor biosynthesis; riboflavin biosynthesis; 2-hydroxy-3-oxobutyl phosphate from D-ribulose 5-phosphate: step 1/1. Its function is as follows. Catalyzes the conversion of D-ribulose 5-phosphate to formate and 3,4-dihydroxy-2-butanone 4-phosphate. The chain is 3,4-dihydroxy-2-butanone 4-phosphate synthase from Shigella boydii serotype 18 (strain CDC 3083-94 / BS512).